The chain runs to 149 residues: Large ribosomal subunit protein uL13 (149 aa).

The protein belongs to the universal ribosomal protein uL13 family. Part of the 50S ribosomal subunit.

Functionally, this protein is one of the early assembly proteins of the 50S ribosomal subunit, although it is not seen to bind rRNA by itself. It is important during the early stages of 50S assembly. The polypeptide is Large ribosomal subunit protein uL13 (Bifidobacterium longum subsp. infantis (strain ATCC 15697 / DSM 20088 / JCM 1222 / NCTC 11817 / S12)).